Here is a 472-residue protein sequence, read N- to C-terminus: Tubulin gamma chain (472 aa).

142 to 148 (AGGTGSG) lines the GTP pocket.

This sequence belongs to the tubulin family. As to quaternary structure, component of the gamma-tubulin small complex (gamma-TuSC) composed of tubulin gamma chain, gamma-tubulin complex protein 2 (GCP2) and gamma-tubulin complex protein 3 (GCP3). Interacts with GCP2 and GCP3. Interacts with EB1.

The protein resides in the cytoplasm. It is found in the cytoskeleton. The protein localises to the flagellum axoneme. Its subcellular location is the flagellum basal body. It localises to the spindle. The protein resides in the microtubule organizing center. Tubulin is the major constituent of microtubules (Potential). The gamma chain is found at microtubule organizing centers (MTOC) such as the centrosome. Component of the gamma-tubulin small complex (gamma-TuSC) involved in microtubule nucleation for the formation of median bodies and in the biogenesis of flagella. Gamma-TuSC may be required for the correct positioning of EB1 within the trophozoites. This is Tubulin gamma chain from Giardia intestinalis (strain ATCC 50803 / WB clone C6) (Giardia lamblia).